We begin with the raw amino-acid sequence, 594 residues long: Alanine--tRNA ligase (594 aa).

The Zn(2+) site is built by His-456, His-460, Cys-558, and His-562.

It belongs to the class-II aminoacyl-tRNA synthetase family. Zn(2+) serves as cofactor.

The protein resides in the cytoplasm. It catalyses the reaction tRNA(Ala) + L-alanine + ATP = L-alanyl-tRNA(Ala) + AMP + diphosphate. Catalyzes the attachment of alanine to tRNA(Ala) in a two-step reaction: alanine is first activated by ATP to form Ala-AMP and then transferred to the acceptor end of tRNA(Ala). Also edits incorrectly charged Ser-tRNA(Ala) and Gly-tRNA(Ala) via its editing domain. The chain is Alanine--tRNA ligase (alaS) from Borreliella afzelii (strain PKo) (Borrelia afzelii).